We begin with the raw amino-acid sequence, 153 residues long: Ribosomal RNA large subunit methyltransferase H (153 aa).

Residues leucine 70, glycine 102, and 121 to 126 each bind S-adenosyl-L-methionine; that span reads LSAMTF.

It belongs to the RNA methyltransferase RlmH family. Homodimer.

It localises to the cytoplasm. The enzyme catalyses pseudouridine(1915) in 23S rRNA + S-adenosyl-L-methionine = N(3)-methylpseudouridine(1915) in 23S rRNA + S-adenosyl-L-homocysteine + H(+). Its function is as follows. Specifically methylates the pseudouridine at position 1915 (m3Psi1915) in 23S rRNA. The chain is Ribosomal RNA large subunit methyltransferase H from Trichlorobacter lovleyi (strain ATCC BAA-1151 / DSM 17278 / SZ) (Geobacter lovleyi).